The following is a 262-amino-acid chain: Ribosome-recycling factor, mitochondrial (262 aa).

A mitochondrion-targeting transit peptide spans 1-55 (MALGLRCFRLVHPAFCNSLAALTRPVSEVTLQTVRGRQNDHGQCMAYAAVPVRHF).

Belongs to the RRF family.

The protein resides in the mitochondrion. Responsible for the disassembly of ribosomes from messenger RNA at the termination of mitochondrial protein biosynthesis. Acts in collaboration with GFM2. Promotes mitochondrial ribosome recycling by dissolution of intersubunit contacts. This Bos taurus (Bovine) protein is Ribosome-recycling factor, mitochondrial (MRRF).